Here is a 141-residue protein sequence, read N- to C-terminus: Large-conductance mechanosensitive channel (141 aa).

The next 3 helical transmembrane spans lie at 14-34 (VVDLAVGVIIGAAFGAIVNSL), 38-58 (VIMPIIGAVTGGLDFSNYYIP), and 82-102 (GQFLTLAVNFTIIAFVLFMVI).

Belongs to the MscL family. In terms of assembly, homopentamer.

It localises to the cell inner membrane. Functionally, channel that opens in response to stretch forces in the membrane lipid bilayer. May participate in the regulation of osmotic pressure changes within the cell. This Methylorubrum extorquens (strain CM4 / NCIMB 13688) (Methylobacterium extorquens) protein is Large-conductance mechanosensitive channel.